The primary structure comprises 401 residues: Imidazolonepropionase (401 aa).

2 residues coordinate Fe(3+): His-66 and His-68. His-66 and His-68 together coordinate Zn(2+). Residues Arg-75, Tyr-138, and His-171 each contribute to the 4-imidazolone-5-propanoate site. Tyr-138 serves as a coordination point for N-formimidoyl-L-glutamate. His-236 is a binding site for Fe(3+). His-236 provides a ligand contact to Zn(2+). Residue Gln-239 coordinates 4-imidazolone-5-propanoate. Asp-311 lines the Fe(3+) pocket. A Zn(2+)-binding site is contributed by Asp-311. Positions 313 and 315 each coordinate N-formimidoyl-L-glutamate. Thr-316 provides a ligand contact to 4-imidazolone-5-propanoate.

It belongs to the metallo-dependent hydrolases superfamily. HutI family. Requires Zn(2+) as cofactor. Fe(3+) is required as a cofactor.

The protein resides in the cytoplasm. It carries out the reaction 4-imidazolone-5-propanoate + H2O = N-formimidoyl-L-glutamate. It participates in amino-acid degradation; L-histidine degradation into L-glutamate; N-formimidoyl-L-glutamate from L-histidine: step 3/3. Catalyzes the hydrolytic cleavage of the carbon-nitrogen bond in imidazolone-5-propanoate to yield N-formimidoyl-L-glutamate. It is the third step in the universal histidine degradation pathway. The polypeptide is Imidazolonepropionase (Pseudomonas entomophila (strain L48)).